Reading from the N-terminus, the 187-residue chain is ECF RNA polymerase sigma factor SigW (187 aa).

Residues 3–95 (MMIKKRIKQV…RKKKPDYYLD (93 aa)) are sigma-70 factor domain-2. A Polymerase core binding motif is present at residues 47-50 (DIAQ). The segment at 125-187 (ELSNTIQQKI…EALRKQLRDL (63 aa)) is sigma-70 factor domain-4. A DNA-binding region (H-T-H motif) is located at residues 166 to 184 (VGTVKTRIHRGREALRKQL).

It belongs to the sigma-70 factor family. ECF subfamily. In terms of assembly, interacts transiently with the RNA polymerase catalytic core formed by RpoA, RpoB, RpoC and RpoZ (2 alpha, 1 beta, 1 beta' and 1 omega subunit) to form the RNA polymerase holoenzyme that can initiate transcription. Forms a heterodimer with cognate anti-sigma factor RsiW, which prevents it from binding to the -10 and -35 promoter elements.

Extracytoplasmic function (ECF) sigma factors are held in an inactive form by a cognate anti-sigma factor (RsiW for this protein) until released by regulated membrane proteolysis (RIP). RIP occurs when an extracytoplasmic signal (envelope stress) triggers a concerted proteolytic cascade to transmit information and elicit cellular responses. The anti-sigma factor RsiW is a membrane protein, binding sigma-W in the cytoplasm. RsiW is first cut extracytoplasmically (site-1 protease, S1P, by PrsW), then within the membrane itself (site-2 protease, S2P, by RasP), while cytoplasmic proteases (predominantly ClpX-ClpP) finish degrading the regulatory protein, liberating sigma-W. Functionally, sigma factors are initiation factors that promote the attachment of RNA polymerase (RNAP) to specific initiation sites and are then released. Sigma-W controls genes involved in response to cell envelope stress such as antimicrobial peptides, alkaline pH, transport processes and detoxification. The polypeptide is ECF RNA polymerase sigma factor SigW (sigW) (Bacillus subtilis (strain 168)).